Consider the following 150-residue polypeptide: MKCPFCAHPDSKVVDSRPDKGGAAIRRRRECESCAKRFTTHERIEETLPLVLKKDGRREPFDRMKIVGGILKACEKRQVSRETVDRLVDRLEGRLQEWSEKEVPSTTIGEWVMTELHDIDEVAYVRFASVYRSFKDVNEFMAELQDLLKK.

A zinc finger lies at 3 to 34; that stretch reads CPFCAHPDSKVVDSRPDKGGAAIRRRRECESC. The ATP-cone domain occupies 49–139; it reads PLVLKKDGRR…VYRSFKDVNE (91 aa).

The protein belongs to the NrdR family. The cofactor is Zn(2+).

Negatively regulates transcription of bacterial ribonucleotide reductase nrd genes and operons by binding to NrdR-boxes. The polypeptide is Transcriptional repressor NrdR (Geobacter metallireducens (strain ATCC 53774 / DSM 7210 / GS-15)).